Consider the following 274-residue polypeptide: Histone H1.1 (274 aa).

Disordered regions lie at residues 1-63 and 129-155; these read MSEV…SSHP and PSAS…PATV. An N-acetylserine modification is found at Ser-2. The segment covering 16–25 has biased composition (low complexity); it reads TAADAPVTDA. The segment covering 40–49 has biased composition (basic and acidic residues); sequence NVKEVKEKKT. The 70-residue stretch at 61 to 130 folds into the H15 domain; it reads SHPTYEEMIK…KVKASFKLPS (70 aa). The span at 129–145 shows a compositional bias: low complexity; the sequence is PSASAKASSPKAAAEKS. Lys-161 participates in a covalent cross-link: Glycyl lysine isopeptide (Lys-Gly) (interchain with G-Cter in ubiquitin). 2 disordered regions span residues 167–233 and 249–274; these read ASKA…PAKK and KTPV…RVKK. 2 stretches are compositionally biased toward low complexity: residues 175 to 185 and 221 to 233; these read AVKPKTAAAKK and AAKT…PAKK.

It belongs to the histone H1/H5 family.

The protein localises to the nucleus. The protein resides in the chromosome. Histones H1 are necessary for the condensation of nucleosome chains into higher-order structures. This chain is Histone H1.1, found in Arabidopsis thaliana (Mouse-ear cress).